The chain runs to 337 residues: DNA-directed RNA polymerase subunit alpha (337 aa).

The tract at residues Met-1–Glu-233 is alpha N-terminal domain (alpha-NTD). The segment at Phe-249 to Tyr-337 is alpha C-terminal domain (alpha-CTD).

Belongs to the RNA polymerase alpha chain family. As to quaternary structure, homodimer. The RNAP catalytic core consists of 2 alpha, 1 beta, 1 beta' and 1 omega subunit. When a sigma factor is associated with the core the holoenzyme is formed, which can initiate transcription.

It catalyses the reaction RNA(n) + a ribonucleoside 5'-triphosphate = RNA(n+1) + diphosphate. Functionally, DNA-dependent RNA polymerase catalyzes the transcription of DNA into RNA using the four ribonucleoside triphosphates as substrates. The sequence is that of DNA-directed RNA polymerase subunit alpha from Brucella ovis (strain ATCC 25840 / 63/290 / NCTC 10512).